A 1248-amino-acid polypeptide reads, in one-letter code: Bifunctional autolysin (1248 aa).

An N-terminal signal peptide occupies residues 1 to 29 (MAKKFNYKLPSMVALTLVGSAVTAHQVQA). The disordered stretch occupies residues 103–134 (GDTRANQSATTNNTQPVAKSTSTTAPKTNTNV). Positions 191–767 (ASAQPRSVAA…AVAQPKTAVK (577 aa)) are N-acetylmuramoyl-L-alanine amidase. 7 GW domains span residues 435 to 509 (TVAA…YNTA), 511 to 585 (SPVN…DTAK), 604 to 678 (TVSS…YNNA), 680 to 754 (SPVN…VPAA), 776 to 851 (TTQT…VQNL), 853 to 928 (KEVK…APTA), and 935 to 1009 (AAKD…KELI). The segment at 768-1248 (AYTVTKPQTT…GKYFDIPQYK (481 aa)) is endo-beta-N-acetylglucosaminidase.

It in the N-terminal section; belongs to the N-acetylmuramoyl-L-alanine amidase 2 family. This sequence in the C-terminal section; belongs to the glycosyl hydrolase 73 family. In terms of assembly, oligomer; forms a ring structure at the cell surface which is important for efficient partitioning of daughter cells after cell division. In terms of processing, undergoes proteolytic processing to generate the two extracellular lytic enzymes, probably at the septal region on the cell surface.

It is found in the secreted. It carries out the reaction Hydrolyzes the link between N-acetylmuramoyl residues and L-amino acid residues in certain cell-wall glycopeptides.. The catalysed reaction is an N(4)-(oligosaccharide-(1-&gt;3)-[oligosaccharide-(1-&gt;6)]-beta-D-Man-(1-&gt;4)-beta-D-GlcNAc-(1-&gt;4)-alpha-D-GlcNAc)-L-asparaginyl-[protein] + H2O = an oligosaccharide-(1-&gt;3)-[oligosaccharide-(1-&gt;6)]-beta-D-Man-(1-&gt;4)-D-GlcNAc + N(4)-(N-acetyl-beta-D-glucosaminyl)-L-asparaginyl-[protein]. Functionally, endohydrolysis of the di-N-acetylchitobiosyl unit in high-mannose glycopeptides and glycoproteins containing the -[(Man)5(GlcNAc)2]-Asn structure. One N-acetyl-D-glucosamine residue remains attached to the protein; the rest of the oligosaccharide is released intact. Cleaves the peptidoglycan connecting the daughter cells at the end of the cell division cycle, resulting in the separation of the two newly divided cells. Acts as an autolysin in penicillin-induced lysis. The chain is Bifunctional autolysin (atl) from Staphylococcus aureus (strain Mu50 / ATCC 700699).